Reading from the N-terminus, the 295-residue chain is Pyridoxal 5'-phosphate synthase subunit PdxS (295 aa).

Asp-25 lines the D-ribose 5-phosphate pocket. Residue Lys-82 is the Schiff-base intermediate with D-ribose 5-phosphate of the active site. Gly-154 is a binding site for D-ribose 5-phosphate. Arg-166 contacts D-glyceraldehyde 3-phosphate. Residues Gly-215 and 236-237 (GS) contribute to the D-ribose 5-phosphate site.

The protein belongs to the PdxS/SNZ family. As to quaternary structure, in the presence of PdxT, forms a dodecamer of heterodimers.

It catalyses the reaction aldehydo-D-ribose 5-phosphate + D-glyceraldehyde 3-phosphate + L-glutamine = pyridoxal 5'-phosphate + L-glutamate + phosphate + 3 H2O + H(+). The protein operates within cofactor biosynthesis; pyridoxal 5'-phosphate biosynthesis. Catalyzes the formation of pyridoxal 5'-phosphate from ribose 5-phosphate (RBP), glyceraldehyde 3-phosphate (G3P) and ammonia. The ammonia is provided by the PdxT subunit. Can also use ribulose 5-phosphate and dihydroxyacetone phosphate as substrates, resulting from enzyme-catalyzed isomerization of RBP and G3P, respectively. The sequence is that of Pyridoxal 5'-phosphate synthase subunit PdxS from Bacillus cereus (strain B4264).